The chain runs to 522 residues: Leucine-rich repeat transmembrane neuronal protein 1 (522 aa).

A signal peptide spans 1-34 (MDFLLLGLCLYWLLRRPSGVVLCLLGACFQMLPA). The 29-residue stretch at 35 to 63 (APSGCPQLCRCEGRLLYCEALNPTEAPHN) folds into the LRRNT domain. Topologically, residues 35–427 (APSGCPQLCR…HAENAVQIHK (393 aa)) are extracellular. Asparagine 63 carries N-linked (GlcNAc...) asparagine glycosylation. LRR repeat units lie at residues 64-87 (LSGL…QFTG), 89-111 (MQLT…AFQK), 112-135 (LRRV…TFRP), 137-159 (PNLR…LFHG), 161-183 (RKLT…IFQD), 184-207 (CRSL…SFAG), 209-231 (FKLT…HFPR), 233-255 (ISLH…LDWV), 256-278 (WNLK…VFET), and 279-302 (VPHL…ILNS). Asparagine 130 carries N-linked (GlcNAc...) asparagine glycosylation. The LRRCT domain occupies 314 to 365 (NLWDCGRNVCALASWLSNFQGRYDGNLQCASPEYAQGEDVLDAVYAFHLCED). Asparagine 380 is a glycosylation site (N-linked (GlcNAc...) asparagine). Residues 382–401 (SDLGPPASSATTLADGGEGQ) form a disordered region. Residues 428–448 (VVTGTMALIFSFLIVVLVLYV) form a helical membrane-spanning segment. The Cytoplasmic portion of the chain corresponds to 449 to 522 (SWKCFPASLR…HQQPARECEV (74 aa)).

Belongs to the LRRTM family.

It localises to the cell membrane. The protein resides in the postsynaptic cell membrane. Functionally, exhibits strong synaptogenic activity, restricted to excitatory presynaptic differentiation, acting at both pre- and postsynaptic level. This chain is Leucine-rich repeat transmembrane neuronal protein 1 (LRRTM1), found in Pongo abelii (Sumatran orangutan).